A 461-amino-acid polypeptide reads, in one-letter code: Kynurenine 3-monooxygenase (461 aa).

The next 2 membrane-spanning stretches (helical) occupy residues 395–415 (GFMN…VTFT) and 432–452 (ILSN…AIGI).

It belongs to the aromatic-ring hydroxylase family. KMO subfamily. The cofactor is FAD.

The protein localises to the mitochondrion. The protein resides in the membrane. The catalysed reaction is L-kynurenine + NADPH + O2 + H(+) = 3-hydroxy-L-kynurenine + NADP(+) + H2O. The protein operates within cofactor biosynthesis; NAD(+) biosynthesis; quinolinate from L-kynurenine: step 1/3. In terms of biological role, catalyzes the hydroxylation of L-kynurenine (L-Kyn) to form 3-hydroxy-L-kynurenine (L-3OHKyn). Required for synthesis of quinolinic acid. The protein is Kynurenine 3-monooxygenase of Caenorhabditis briggsae.